We begin with the raw amino-acid sequence, 200 residues long: Casparian strip membrane protein 1 (200 aa).

The Cytoplasmic portion of the chain corresponds to Met-1–Gly-38. Residues Leu-39–Ala-59 traverse the membrane as a helical segment. At Thr-60 to Thr-86 the chain is on the extracellular side. The chain crosses the membrane as a helical span at residues Phe-87 to Phe-107. Residues Ser-108–Arg-121 are Cytoplasmic-facing. The helical transmembrane segment at Leu-122–Ala-142 threads the bilayer. The Extracellular portion of the chain corresponds to Ala-143–Glu-171. The chain crosses the membrane as a helical span at residues Val-172–Leu-192. At Ser-193 to His-200 the chain is on the cytoplasmic side.

The protein belongs to the Casparian strip membrane proteins (CASP) family. Homodimer and heterodimers.

The protein localises to the cell membrane. Functionally, regulates membrane-cell wall junctions and localized cell wall deposition. Required for establishment of the Casparian strip membrane domain (CSD) and the subsequent formation of Casparian strips, a cell wall modification of the root endodermis that determines an apoplastic barrier between the intraorganismal apoplasm and the extraorganismal apoplasm and prevents lateral diffusion. The chain is Casparian strip membrane protein 1 from Theobroma cacao (Cacao).